Consider the following 362-residue polypeptide: Dihydroorotate dehydrogenase (quinone) (362 aa).

Residues 62-66 (AGYDK) and Thr86 each bind FMN. Lys66 contributes to the substrate binding site. Position 111-115 (111-115 (NRLGF)) interacts with substrate. FMN is bound by residues Asn139 and Asn170. Asn170 serves as a coordination point for substrate. The active-site Nucleophile is Ser173. Asn175 provides a ligand contact to substrate. Lys215 and Ser243 together coordinate FMN. Residue 244-245 (NT) participates in substrate binding. FMN is bound by residues Gly266, Gly295, and 316 to 317 (YS).

The protein belongs to the dihydroorotate dehydrogenase family. Type 2 subfamily. As to quaternary structure, monomer. Requires FMN as cofactor.

Its subcellular location is the cell membrane. The catalysed reaction is (S)-dihydroorotate + a quinone = orotate + a quinol. The protein operates within pyrimidine metabolism; UMP biosynthesis via de novo pathway; orotate from (S)-dihydroorotate (quinone route): step 1/1. Catalyzes the conversion of dihydroorotate to orotate with quinone as electron acceptor. This is Dihydroorotate dehydrogenase (quinone) from Rhizobium etli (strain ATCC 51251 / DSM 11541 / JCM 21823 / NBRC 15573 / CFN 42).